Here is a 186-residue protein sequence, read N- to C-terminus: ATP synthase subunit delta, cyanelle (186 aa).

The protein belongs to the ATPase delta chain family. As to quaternary structure, F-type ATPases have 2 components, F(1) - the catalytic core - and F(0) - the membrane proton channel. F(1) has five subunits: alpha(3), beta(3), gamma(1), delta(1), epsilon(1). CF(0) has four main subunits: a(1), b(1), b'(1) and c(10-14). The alpha and beta chains form an alternating ring which encloses part of the gamma chain. F(1) is attached to F(0) by a central stalk formed by the gamma and epsilon chains, while a peripheral stalk is formed by the delta, b and b' chains.

It is found in the plastid. Its subcellular location is the cyanelle thylakoid membrane. Its function is as follows. F(1)F(0) ATP synthase produces ATP from ADP in the presence of a proton or sodium gradient. F-type ATPases consist of two structural domains, F(1) containing the extramembraneous catalytic core and F(0) containing the membrane proton channel, linked together by a central stalk and a peripheral stalk. During catalysis, ATP synthesis in the catalytic domain of F(1) is coupled via a rotary mechanism of the central stalk subunits to proton translocation. Functionally, this protein is part of the stalk that links CF(0) to CF(1). It either transmits conformational changes from CF(0) to CF(1) or is implicated in proton conduction. The chain is ATP synthase subunit delta, cyanelle from Cyanophora paradoxa.